The primary structure comprises 242 residues: UPF0246 protein SP_1547 (242 aa).

Belongs to the UPF0246 family.

This Streptococcus pneumoniae serotype 4 (strain ATCC BAA-334 / TIGR4) protein is UPF0246 protein SP_1547.